A 224-amino-acid polypeptide reads, in one-letter code: UPF0758 protein PFLU_5982 (224 aa).

An MPN domain is found at 102-224 (VLESPKAVRD…PLSMAEYGWL (123 aa)). Zn(2+) contacts are provided by H173, H175, and D186. Residues 173-186 (HNHPSGSLEPSAAD) carry the JAMM motif motif.

The protein belongs to the UPF0758 family.

The sequence is that of UPF0758 protein PFLU_5982 from Pseudomonas fluorescens (strain SBW25).